We begin with the raw amino-acid sequence, 261 residues long: Thiamine thiazole synthase (261 aa).

NAD(+)-binding positions include Ser-33, 52–53, Gly-60, Val-124, and 152–154; these read ER and HVD. Fe cation is bound by residues Asp-154 and His-169. Residue Met-219 participates in NAD(+) binding. Arg-229 is a glycine binding site.

The protein belongs to the THI4 family. Homooctamer; tetramer of dimers. Requires Fe(2+) as cofactor.

The catalysed reaction is hydrogen sulfide + glycine + NAD(+) = ADP-5-ethyl-4-methylthiazole-2-carboxylate + nicotinamide + 3 H2O + H(+). It participates in cofactor biosynthesis; thiamine diphosphate biosynthesis. Involved in the biosynthesis of the thiazole moiety of thiamine. Catalyzes the conversion of NAD and glycine to adenosine diphosphate 5-(2-hydroxyethyl)-4-methylthiazole-2-carboxylate (ADT), an adenylated thiazole intermediate, using free sulfide as a source of sulfur. This is Thiamine thiazole synthase from Pyrobaculum arsenaticum (strain DSM 13514 / JCM 11321 / PZ6).